The chain runs to 245 residues: Protein crossbronx (245 aa).

Residues 20 to 177 (QQEYKILAEY…VQESIVESKS (158 aa)) enclose the UBC core domain.

It belongs to the ubiquitin-conjugating enzyme family. FTS subfamily.

This Drosophila virilis (Fruit fly) protein is Protein crossbronx (cbx).